We begin with the raw amino-acid sequence, 481 residues long: Tryptophan--tRNA ligase, cytoplasmic (481 aa).

In terms of domain architecture, WHEP-TRS spans 12 to 68; it reads SPLELFNSIAAQGELVRSLKAGNAPKDEIESAVKMLLSLKMNYKTAMGEEYKAGCPP. Residues 65–85 are disordered; sequence GCPPGNSTAGSNGDPDATKAS. Lys-158 is modified (N6-succinyllysine). A 'HIGH' region motif is present at residues 168–177; that stretch reads PSSEAMHLGH. A 'KMSKS' region motif is present at residues 353–357; the sequence is KMSAS. Ser-355 is modified (phosphoserine).

The protein belongs to the class-I aminoacyl-tRNA synthetase family. In terms of assembly, homodimer. Interacts with oxidized form of GAPDH. In terms of processing, proteolytic cleavage generates 2 forms; T1-TrpRS and T2-TrpRS.

It is found in the cytoplasm. It carries out the reaction tRNA(Trp) + L-tryptophan + ATP = L-tryptophyl-tRNA(Trp) + AMP + diphosphate + H(+). In terms of biological role, catalyzes the attachment of tryptophan to tRNA(Trp) in a two-step reaction: tryptophan is first activated by ATP to form Trp-AMP and then transferred to the acceptor end of the tRNA(Trp). Could also possess an angiostatic activity. The polypeptide is Tryptophan--tRNA ligase, cytoplasmic (Rattus norvegicus (Rat)).